The following is a 124-amino-acid chain: Small ribosomal subunit protein uS12 (124 aa).

The tract at residues methionine 1–leucine 24 is disordered. At aspartate 90 the chain carries 3-methylthioaspartic acid.

Belongs to the universal ribosomal protein uS12 family. As to quaternary structure, part of the 30S ribosomal subunit. Contacts proteins S8 and S17. May interact with IF1 in the 30S initiation complex.

Its function is as follows. With S4 and S5 plays an important role in translational accuracy. In terms of biological role, interacts with and stabilizes bases of the 16S rRNA that are involved in tRNA selection in the A site and with the mRNA backbone. Located at the interface of the 30S and 50S subunits, it traverses the body of the 30S subunit contacting proteins on the other side and probably holding the rRNA structure together. The combined cluster of proteins S8, S12 and S17 appears to hold together the shoulder and platform of the 30S subunit. This Anaplasma phagocytophilum (strain HZ) protein is Small ribosomal subunit protein uS12.